Reading from the N-terminus, the 260-residue chain is Alpha- and beta-fibrinogenase OhS1 (260 aa).

Positions 1 to 18 are cleaved as a signal peptide; the sequence is MALIRVLASLLILQLSYA. A propeptide spanning residues 19–24 is cleaved from the precursor; the sequence is VTPFDR. Residues 25-248 form the Peptidase S1 domain; sequence IIGGFECNEY…YIDWIEGIIA (224 aa). 6 disulfide bridges follow: Cys31–Cys163, Cys50–Cys66, Cys98–Cys255, Cys142–Cys209, Cys174–Cys188, and Cys199–Cys224. Asn44 is a glycosylation site (N-linked (GlcNAc...) asparagine). Catalysis depends on His65, which acts as the Charge relay system. Asn79 is a glycosylation site (N-linked (GlcNAc...) asparagine). Residue Asp110 is the Charge relay system of the active site. Asn117 and Asn121 each carry an N-linked (GlcNAc...) asparagine glycan. Residue Ser203 is the Charge relay system of the active site. A glycan (N-linked (GlcNAc...) asparagine) is linked at Asn250.

It belongs to the peptidase S1 family. Snake venom subfamily. In terms of assembly, monomer. Expressed by the venom gland.

It is found in the secreted. Completely inhibited by NPGB, PMSF, diisopropylfluorophosphate (DFP), benzamidine and soybean trypsin inhibitor. Not inhibited by EDTA. Functionally, snake venom serine protease that possesses potent fibrinogenolytic (on both alpha- (FGA) and beta-chains (FGB)) and amidolytic activities. Selectively cleaves Arg-|-Xaa or Lys-|-Xaa bonds. The protein is Alpha- and beta-fibrinogenase OhS1 of Ophiophagus hannah (King cobra).